A 431-amino-acid polypeptide reads, in one-letter code: Glucose-1-phosphate adenylyltransferase (431 aa).

Lysine 39 contacts beta-D-fructose 1,6-bisphosphate. Positions 40, 46, and 52 each coordinate AMP. Tyrosine 114 is an alpha-D-glucose 1-phosphate binding site. Arginine 130 is a binding site for AMP. Residues glycine 179, 194-195 (EK), and serine 212 contribute to the alpha-D-glucose 1-phosphate site. Residue arginine 386 coordinates AMP. 429–431 (QER) provides a ligand contact to beta-D-fructose 1,6-bisphosphate.

Belongs to the bacterial/plant glucose-1-phosphate adenylyltransferase family. In terms of assembly, homotetramer.

The catalysed reaction is alpha-D-glucose 1-phosphate + ATP + H(+) = ADP-alpha-D-glucose + diphosphate. The protein operates within glycan biosynthesis; glycogen biosynthesis. Allosterically activated by fructose-1,6-bisphosphate (F16BP) and inhibited by AMP. Functionally, involved in the biosynthesis of ADP-glucose, a building block required for the elongation reactions to produce glycogen. Catalyzes the reaction between ATP and alpha-D-glucose 1-phosphate (G1P) to produce pyrophosphate and ADP-Glc. This is Glucose-1-phosphate adenylyltransferase from Klebsiella pneumoniae (strain 342).